A 490-amino-acid polypeptide reads, in one-letter code: Betaine aldehyde dehydrogenase (490 aa).

Residues threonine 26 and aspartate 93 each contribute to the K(+) site. 150 to 152 (GAW) contacts NAD(+). Residue lysine 162 is the Charge relay system of the active site. 176-179 (KPSE) contacts NAD(+). Valine 180 serves as a coordination point for K(+). 230 to 233 (GVAT) contributes to the NAD(+) binding site. Leucine 246 is a binding site for K(+). The active-site Proton acceptor is the glutamate 252. NAD(+) contacts are provided by glycine 254, cysteine 286, and glutamate 387. Cysteine 286 functions as the Nucleophile in the catalytic mechanism. Residue cysteine 286 is modified to Cysteine sulfenic acid (-SOH). K(+) is bound by residues lysine 457 and glycine 460. The active-site Charge relay system is the glutamate 464.

This sequence belongs to the aldehyde dehydrogenase family. Dimer of dimers. It depends on K(+) as a cofactor.

The catalysed reaction is betaine aldehyde + NAD(+) + H2O = glycine betaine + NADH + 2 H(+). Its pathway is amine and polyamine biosynthesis; betaine biosynthesis via choline pathway; betaine from betaine aldehyde: step 1/1. Involved in the biosynthesis of the osmoprotectant glycine betaine. Catalyzes the irreversible oxidation of betaine aldehyde to the corresponding acid. The polypeptide is Betaine aldehyde dehydrogenase (Stenotrophomonas maltophilia (strain K279a)).